Consider the following 149-residue polypeptide: Transcriptional regulator MraZ (149 aa).

SpoVT-AbrB domains lie at 7-54 and 83-126; these read KYVN…GISH and AVQL…QPQN.

Belongs to the MraZ family. In terms of assembly, forms oligomers.

Its subcellular location is the cytoplasm. It localises to the nucleoid. The sequence is that of Transcriptional regulator MraZ from Rickettsia akari (strain Hartford).